A 189-amino-acid polypeptide reads, in one-letter code: GTP cyclohydrolase 1 (189 aa).

3 residues coordinate Zn(2+): cysteine 78, histidine 81, and cysteine 150.

This sequence belongs to the GTP cyclohydrolase I family. In terms of assembly, toroid-shaped homodecamer, composed of two pentamers of five dimers.

The enzyme catalyses GTP + H2O = 7,8-dihydroneopterin 3'-triphosphate + formate + H(+). Its pathway is cofactor biosynthesis; 7,8-dihydroneopterin triphosphate biosynthesis; 7,8-dihydroneopterin triphosphate from GTP: step 1/1. The chain is GTP cyclohydrolase 1 from Listeria monocytogenes serovar 1/2a (strain ATCC BAA-679 / EGD-e).